The following is a 120-amino-acid chain: NAD(P)H-quinone oxidoreductase subunit 3, chloroplastic (120 aa).

A run of 3 helical transmembrane segments spans residues 9–29 (IFWA…FISG), 64–84 (MFAL…PWAM), and 88–108 (VLGV…ILGL).

This sequence belongs to the complex I subunit 3 family. NDH is composed of at least 16 different subunits, 5 of which are encoded in the nucleus.

The protein resides in the plastid. Its subcellular location is the chloroplast thylakoid membrane. The enzyme catalyses a plastoquinone + NADH + (n+1) H(+)(in) = a plastoquinol + NAD(+) + n H(+)(out). It carries out the reaction a plastoquinone + NADPH + (n+1) H(+)(in) = a plastoquinol + NADP(+) + n H(+)(out). In terms of biological role, NDH shuttles electrons from NAD(P)H:plastoquinone, via FMN and iron-sulfur (Fe-S) centers, to quinones in the photosynthetic chain and possibly in a chloroplast respiratory chain. The immediate electron acceptor for the enzyme in this species is believed to be plastoquinone. Couples the redox reaction to proton translocation, and thus conserves the redox energy in a proton gradient. The sequence is that of NAD(P)H-quinone oxidoreductase subunit 3, chloroplastic from Barbarea verna (Land cress).